Consider the following 327-residue polypeptide: tRNA N6-adenosine threonylcarbamoyltransferase (327 aa).

Positions 109 and 113 each coordinate Fe cation. Substrate contacts are provided by residues 132–136 (MVSGG), Asp-165, Gly-178, Asp-182, and Asn-268. A Fe cation-binding site is contributed by Asp-296.

It belongs to the KAE1 / TsaD family. It depends on Fe(2+) as a cofactor.

Its subcellular location is the cytoplasm. The enzyme catalyses L-threonylcarbamoyladenylate + adenosine(37) in tRNA = N(6)-L-threonylcarbamoyladenosine(37) in tRNA + AMP + H(+). Functionally, required for the formation of a threonylcarbamoyl group on adenosine at position 37 (t(6)A37) in tRNAs that read codons beginning with adenine. Is involved in the transfer of the threonylcarbamoyl moiety of threonylcarbamoyl-AMP (TC-AMP) to the N6 group of A37, together with TsaE and TsaB. TsaD likely plays a direct catalytic role in this reaction. This chain is tRNA N6-adenosine threonylcarbamoyltransferase, found in Thermotoga neapolitana (strain ATCC 49049 / DSM 4359 / NBRC 107923 / NS-E).